We begin with the raw amino-acid sequence, 166 residues long: Large ribosomal subunit protein uL10 (166 aa).

Belongs to the universal ribosomal protein uL10 family. Part of the ribosomal stalk of the 50S ribosomal subunit. The N-terminus interacts with L11 and the large rRNA to form the base of the stalk. The C-terminus forms an elongated spine to which L12 dimers bind in a sequential fashion forming a multimeric L10(L12)X complex.

Forms part of the ribosomal stalk, playing a central role in the interaction of the ribosome with GTP-bound translation factors. This is Large ribosomal subunit protein uL10 from Geobacillus sp. (strain WCH70).